Here is a 1993-residue protein sequence, read N- to C-terminus: Otoferlin (1993 aa).

The C2 1 domain occupies 1 to 98 (MALIVHLKTV…VEENRVEVSD (98 aa)). The Cytoplasmic segment spans residues 1-1959 (MALIVHLKTV…IKYLICTRYK (1959 aa)). The segment at 127-212 (PWDDGDFLGD…KEEPQRQDEP (86 aa)) is disordered. The span at 129 to 145 (DDGDFLGDESLQEEEKD) shows a compositional bias: acidic residues. 2 stretches are compositionally biased toward basic and acidic residues: residues 163–186 (PGEKSFRSKGKEKTKGGRDGEHKA) and 202–211 (HKEEPQRQDE). C2 domains follow at residues 251–372 (KRSK…HKWA) and 415–546 (IEGN…FLPT). A disordered region spans residues 654-708 (NYGNEVDGTSRPQRPRPRKEPGDEEEVDLIQNSSDDEGDEAGDLASVSSTPPMRP). Residues 675–695 (GDEEEVDLIQNSSDDEGDEAG) are compositionally biased toward acidic residues. The stretch at 807–836 (RERLKSCMRELESMGQQAKSLRAQVKRHTV) forms a coiled coil. 2 consecutive C2 domains span residues 959–1084 (LHSF…PPRF) and 1131–1257 (RGPI…ANWN). Residues Asp991, Asp997, Asp1053, Asp1055, and Asp1061 each coordinate Ca(2+). Disordered regions lie at residues 1294–1318 (AEDEKERKKKKKKGPSEEAEEEEPD) and 1339–1398 (LRQH…EKKK). Residues 1348–1357 (DLEEKEEMDS) show a composition bias toward acidic residues. The segment covering 1366-1379 (KNKEKSRAAKEEKK) has biased composition (basic and acidic residues). 2 consecutive C2 domains span residues 1460–1589 (LPED…ATCG) and 1710–1861 (DMPA…KQCT). Residues Asp1504, Asp1510, Asp1559, Asp1561, Asp1567, Asp1832, Ser1835, and Asp1838 each contribute to the Ca(2+) site. Residues 1960–1980 (WLIIKIVLALLGLLMLALFLY) traverse the membrane as a helical segment. Topologically, residues 1981–1993 (SLPGYMVKKLLGA) are extracellular.

The protein belongs to the ferlin family. In terms of assembly, interacts with SNAP25; the interaction is direct. Interacts with STX1; the interaction is direct. Interacts with RAB8B. The cofactor is Ca(2+). In terms of tissue distribution, isoform 1 is expressed in the cochlea and brain. Expressed in cerebellum (Purkinje cells), hippocampus (granule cells of the dentate gyrus and in pyramidal cells of the CA1-CA3 region) and cortex (stellate and pyramidal cells). Expressed in hair cells of vestibular organs such as the saccule, utricle and crista ampullari. Expressed in the cochlear inner and outer cells (IHCs and OHCs) (at protein level). Expressed in brain: brainstem, cerebellum (granules cells and Purkinje cell layer), cortex (layers IV and V), inferior colliculus, superior colliculus and hippocampus (granule cells of the dentate gyrus and in pyramidal cells of the CA1-CA3 region).

It is found in the cytoplasmic vesicle. The protein resides in the secretory vesicle. The protein localises to the synaptic vesicle membrane. It localises to the basolateral cell membrane. Its subcellular location is the endoplasmic reticulum membrane. It is found in the golgi apparatus membrane. The protein resides in the presynaptic cell membrane. The protein localises to the cell membrane. Functionally, key calcium ion sensor involved in the Ca(2+)-triggered synaptic vesicle-plasma membrane fusion and in the control of neurotransmitter release at these output synapses. Interacts in a calcium-dependent manner to the presynaptic SNARE proteins at ribbon synapses of cochlear inner hair cells (IHCs) to trigger exocytosis of neurotransmitter. Also essential to synaptic exocytosis in immature outer hair cells (OHCs). May also play a role within the recycling of endosomes. The sequence is that of Otoferlin (Otof) from Rattus norvegicus (Rat).